The chain runs to 255 residues: Hydroxyacylglutathione hydrolase (255 aa).

Zn(2+)-binding residues include histidine 52, histidine 54, aspartate 56, histidine 57, histidine 108, aspartate 130, and histidine 168.

The protein belongs to the metallo-beta-lactamase superfamily. Glyoxalase II family. In terms of assembly, monomer. Zn(2+) is required as a cofactor.

The enzyme catalyses an S-(2-hydroxyacyl)glutathione + H2O = a 2-hydroxy carboxylate + glutathione + H(+). The protein operates within secondary metabolite metabolism; methylglyoxal degradation; (R)-lactate from methylglyoxal: step 2/2. Thiolesterase that catalyzes the hydrolysis of S-D-lactoyl-glutathione to form glutathione and D-lactic acid. This Albidiferax ferrireducens (strain ATCC BAA-621 / DSM 15236 / T118) (Rhodoferax ferrireducens) protein is Hydroxyacylglutathione hydrolase.